We begin with the raw amino-acid sequence, 117 residues long: Large ribosomal subunit protein bL20 (117 aa).

It belongs to the bacterial ribosomal protein bL20 family.

Functionally, binds directly to 23S ribosomal RNA and is necessary for the in vitro assembly process of the 50S ribosomal subunit. It is not involved in the protein synthesizing functions of that subunit. The sequence is that of Large ribosomal subunit protein bL20 from Campylobacter lari (strain RM2100 / D67 / ATCC BAA-1060).